Consider the following 331-residue polypeptide: ABSCISIC ACID-INSENSITIVE 5-like protein 1 (331 aa).

2 positions are modified to phosphoserine: S40 and S98. A Phosphothreonine modification is found at T143. One can recognise a bZIP domain in the interval 247 to 310; sequence MERRQRRMIK…RQEIISRSKQ (64 aa). A basic motif region spans residues 249 to 268; the sequence is RRQRRMIKNRESAARSRARR. The segment at 275–289 is leucine-zipper; sequence LELELNNLTEENTKL. Basic and acidic residues predominate over residues 296 to 320; that stretch reads NEKKRRQEIISRSKQVTKEKSGDKL. Residues 296–331 are disordered; sequence NEKKRRQEIISRSKQVTKEKSGDKLRKIRRMASAGW.

It belongs to the bZIP family. ABI5 subfamily. DNA-binding heterodimer with AREB3/DPBF3 or EEL/DPBF4. Interacts with the AFP proteins AFP1, AFP2 and AFP3. As to expression, predominantly expressed in seeds.

The protein localises to the nucleus. Its function is as follows. Could participate in abscisic acid-regulated gene expression during seed development. This is ABSCISIC ACID-INSENSITIVE 5-like protein 1 (DPBF2) from Arabidopsis thaliana (Mouse-ear cress).